The following is a 648-amino-acid chain: Biosynthetic arginine decarboxylase (648 aa).

K109 carries the post-translational modification N6-(pyridoxal phosphate)lysine. 291 to 301 contributes to the substrate binding site; the sequence is IDVGGGLGIDF.

It belongs to the Orn/Lys/Arg decarboxylase class-II family. SpeA subfamily. It depends on Mg(2+) as a cofactor. The cofactor is pyridoxal 5'-phosphate.

It carries out the reaction L-arginine + H(+) = agmatine + CO2. It functions in the pathway amine and polyamine biosynthesis; agmatine biosynthesis; agmatine from L-arginine: step 1/1. Its function is as follows. Catalyzes the biosynthesis of agmatine from arginine. This is Biosynthetic arginine decarboxylase from Prochlorococcus marinus (strain MIT 9215).